Here is a 400-residue protein sequence, read N- to C-terminus: Cell division protein FtsZ 2 (400 aa).

Residues 1-16 (MQDIVREAMERDEAER) are compositionally biased toward basic and acidic residues. Residues 1–30 (MQDIVREAMERDEAERQTQSSLEDSDDQFG) form a disordered region. Residues 41 to 45 (GAGNN), 128 to 130 (GTG), E159, R162, and D205 each bind GTP. The interval 338 to 400 (VLGPSTQKQA…EKNNGLDVIR (63 aa)) is disordered. Low complexity predominate over residues 352–364 (QSIQSRESQQQHS). The span at 365 to 382 (GSEFDSSERAQTAQSGTW) shows a compositional bias: polar residues. The span at 385–400 (GGRDEVEKNNGLDVIR) shows a compositional bias: basic and acidic residues.

This sequence belongs to the FtsZ family. In terms of assembly, homodimer. Polymerizes to form a dynamic ring structure in a strictly GTP-dependent manner. Interacts directly with several other division proteins. Interacts with SepF.

It localises to the cytoplasm. Its function is as follows. Essential cell division protein that forms a contractile ring structure (Z ring) at the future cell division site. The regulation of the ring assembly controls the timing and the location of cell division. One of the functions of the FtsZ ring is to recruit other cell division proteins to the septum to produce a new cell wall between the dividing cells. Binds GTP and shows GTPase activity. Required for division ring constriction. This is Cell division protein FtsZ 2 from Haloferax volcanii (strain ATCC 29605 / DSM 3757 / JCM 8879 / NBRC 14742 / NCIMB 2012 / VKM B-1768 / DS2) (Halobacterium volcanii).